Consider the following 782-residue polypeptide: Probable methionine--tRNA ligase, cytoplasmic (782 aa).

Residues 231–241 (PYVNNVPHLGN) carry the 'HIGH' region motif. A 'KMSKS' region motif is present at residues 551–555 (KFSKS).

The protein belongs to the class-I aminoacyl-tRNA synthetase family.

Its subcellular location is the cytoplasm. The enzyme catalyses tRNA(Met) + L-methionine + ATP = L-methionyl-tRNA(Met) + AMP + diphosphate. In Schizosaccharomyces pombe (strain 972 / ATCC 24843) (Fission yeast), this protein is Probable methionine--tRNA ligase, cytoplasmic (rar1).